The sequence spans 308 residues: Glutathione synthetase (308 aa).

Positions 120–304 constitute an ATP-grasp domain; the sequence is KLGALRFNNL…LADQVIARLL (185 aa). Position 146–202 (146–202) interacts with ATP; the sequence is AREQEEVVLKPLGGRAGQGLVRVAGAAPGLEALLELVTDQEQLPVMVQRFLPAVIEG. Positions 275 and 277 each coordinate Mg(2+).

This sequence belongs to the prokaryotic GSH synthase family. The cofactor is Mg(2+). It depends on Mn(2+) as a cofactor.

The catalysed reaction is gamma-L-glutamyl-L-cysteine + glycine + ATP = glutathione + ADP + phosphate + H(+). Its pathway is sulfur metabolism; glutathione biosynthesis; glutathione from L-cysteine and L-glutamate: step 2/2. This chain is Glutathione synthetase, found in Prochlorococcus marinus (strain MIT 9313).